An 82-amino-acid chain; its full sequence is Probable tautomerase XF_1725 (82 aa).

Pro-2 (proton acceptor; via imino nitrogen) is an active-site residue.

This sequence belongs to the 4-oxalocrotonate tautomerase family.

This is Probable tautomerase XF_1725 from Xylella fastidiosa (strain 9a5c).